The sequence spans 189 residues: Molybdopterin synthase catalytic subunit (189 aa).

A Phosphoserine modification is found at Ser20. Substrate-binding positions include 143-144 (HR), Lys159, and 166-168 (KKE).

Belongs to the MoaE family. MOCS2B subfamily. As to quaternary structure, heterotetramer; composed of 2 small (MOCS2A) and 2 large (MOCS2B) subunits.

Its subcellular location is the cytoplasm. It localises to the cytosol. The catalysed reaction is 2 [molybdopterin-synthase sulfur-carrier protein]-C-terminal-Gly-aminoethanethioate + cyclic pyranopterin phosphate + H2O = molybdopterin + 2 [molybdopterin-synthase sulfur-carrier protein]-C-terminal Gly-Gly + 2 H(+). It participates in cofactor biosynthesis; molybdopterin biosynthesis. Catalytic subunit of the molybdopterin synthase complex, a complex that catalyzes the conversion of precursor Z into molybdopterin. Acts by mediating the incorporation of 2 sulfur atoms from thiocarboxylated MOCS2A into precursor Z to generate a dithiolene group. The chain is Molybdopterin synthase catalytic subunit from Bos taurus (Bovine).